A 316-amino-acid chain; its full sequence is Putative metal-binding protein TP_0034 (316 aa).

The signal sequence occupies residues 1-19 (MQRCSVVAALAGVVFLAQA). 3 residues coordinate a divalent metal cation: His-68, His-146, and His-210.

Belongs to the bacterial solute-binding protein 9 family.

Its subcellular location is the periplasm. Functionally, part of an ATP-binding cassette (ABC) transport system involved in metal import. Binds a metal with high affinity and specificity and delivers it to the membrane permease for translocation into the cytoplasm. This chain is Putative metal-binding protein TP_0034, found in Treponema pallidum (strain Nichols).